Here is a 638-residue protein sequence, read N- to C-terminus: 1-deoxy-D-xylulose-5-phosphate synthase (638 aa).

Thiamine diphosphate-binding positions include His-79 and 120–122; that span reads GHS. Asp-151 is a binding site for Mg(2+). Residues 152 to 153, Asn-182, Tyr-291, and Glu-373 contribute to the thiamine diphosphate site; that span reads GA. A Mg(2+)-binding site is contributed by Asn-182.

It belongs to the transketolase family. DXPS subfamily. Homodimer. Mg(2+) is required as a cofactor. Thiamine diphosphate serves as cofactor.

It carries out the reaction D-glyceraldehyde 3-phosphate + pyruvate + H(+) = 1-deoxy-D-xylulose 5-phosphate + CO2. Its pathway is metabolic intermediate biosynthesis; 1-deoxy-D-xylulose 5-phosphate biosynthesis; 1-deoxy-D-xylulose 5-phosphate from D-glyceraldehyde 3-phosphate and pyruvate: step 1/1. Functionally, catalyzes the acyloin condensation reaction between C atoms 2 and 3 of pyruvate and glyceraldehyde 3-phosphate to yield 1-deoxy-D-xylulose-5-phosphate (DXP). The sequence is that of 1-deoxy-D-xylulose-5-phosphate synthase from Xanthomonas oryzae pv. oryzae (strain MAFF 311018).